The sequence spans 126 residues: Aspartate 1-decarboxylase (126 aa).

Ser25 acts as the Schiff-base intermediate with substrate; via pyruvic acid in catalysis. Ser25 bears the Pyruvic acid (Ser) mark. Residue Thr57 coordinates substrate. Catalysis depends on Tyr58, which acts as the Proton donor. 73-75 lines the substrate pocket; the sequence is GGA.

This sequence belongs to the PanD family. In terms of assembly, heterooctamer of four alpha and four beta subunits. It depends on pyruvate as a cofactor. Post-translationally, is synthesized initially as an inactive proenzyme, which is activated by self-cleavage at a specific serine bond to produce a beta-subunit with a hydroxyl group at its C-terminus and an alpha-subunit with a pyruvoyl group at its N-terminus.

The protein localises to the cytoplasm. The enzyme catalyses L-aspartate + H(+) = beta-alanine + CO2. The protein operates within cofactor biosynthesis; (R)-pantothenate biosynthesis; beta-alanine from L-aspartate: step 1/1. Catalyzes the pyruvoyl-dependent decarboxylation of aspartate to produce beta-alanine. In Xanthomonas campestris pv. campestris (strain ATCC 33913 / DSM 3586 / NCPPB 528 / LMG 568 / P 25), this protein is Aspartate 1-decarboxylase.